The sequence spans 409 residues: Peptidase T (409 aa).

His78 is a binding site for Zn(2+). Asp80 is an active-site residue. A Zn(2+)-binding site is contributed by Asp140. Glu173 acts as the Proton acceptor in catalysis. The Zn(2+) site is built by Glu174, Asp196, and His379.

It belongs to the peptidase M20B family. Requires Zn(2+) as cofactor.

It is found in the cytoplasm. The enzyme catalyses Release of the N-terminal residue from a tripeptide.. Functionally, cleaves the N-terminal amino acid of tripeptides. In Escherichia coli O139:H28 (strain E24377A / ETEC), this protein is Peptidase T.